The chain runs to 503 residues: METKQERETGRSSPDPSPRKLIRRAATWEISDSDNEEETNKPQTESRKGPIVNIEATDQLLGVQKDPAQQPDVEEKTKNLVLPPPTSTTPSPTRRSRKKKTPEQVAAEQEQAEEKKRQRELKRQEKAQKKELEKIERERRKETNLALKLLRPDQCGKYMVVKVDAGLLEDAGSEDVLEALRVAEYNYSIEPHSVPQSISWRREMPADWTCIEGMDMKEEEEDQLLVLVEPKSYLSSVRTYAQAPYYFCVGNEMEEIPGSVFSIPAKNPHKKVTLVIIGLQEYRWCERLSRQIQRQSLDAAEGRDSNKDQSATRATRQQIQEALVFLQLHYNTEVLCLDTWKELGQHVCAVTKSIAQRPFRKHWEAQTFSFCTSAGSWRGWGPRGVLTGLPLTWRRQIQQLNRVSPAMAAVVSQAYPSPQLLMQAYSACGSDRERMSLLTDLRIPQDNNTGVTQKAEDPREVADIAQEGDQVPGRERRIGPDLSRRIWLLMTSKNPELVLDLNS.

Composition is skewed to basic and acidic residues over residues 1–10, 38–48, and 112–135; these read METKQERETG, ETNKPQTESRK, and AEEK…LEKI. Residues 1 to 135 form a disordered region; the sequence is METKQERETG…KAQKKELEKI (135 aa). Residues 70 to 366 form a nuclease-like domain; forms the post-nick DNA binding interface and is involved in DNA recognition and bending region; it reads QPDVEEKTKN…RPFRKHWEAQ (297 aa). Residues 103–151 are a coiled coil; the sequence is EQVAAEQEQAEEKKRQRELKRQEKAQKKELEKIERERRKETNLALKLLR. Positions 388 to 503 are helix-hairpin-helix (2HhH); forms the pre-nick DNA binding interface and is involved in DNA recognition and bending; sequence GLPLTWRRQI…NPELVLDLNS (116 aa).

The protein belongs to the EME1/MMS4 family. In terms of assembly, part of the heterodimeric MUS81-EME2 complex; the complex forms specifically during the DNA replication phase of the cell cycle.

It is found in the nucleus. Its function is as follows. Non-catalytic subunit of the structure-specific, heterodimeric DNA endonuclease MUS81-EME2 which is involved in the maintenance of genome stability. In the complex, EME2 is required for DNA cleavage, participating in DNA recognition and bending. MUS81-EME2 cleaves 3'-flaps and nicked Holliday junctions, and exhibit limited endonuclease activity with 5' flaps and nicked double-stranded DNAs. MUS81-EME2 which is active during the replication of DNA is more specifically involved in replication fork processing. Replication forks frequently encounter obstacles to their passage, including DNA base lesions, DNA interstrand cross-links, difficult-to-replicate sequences, transcription bubbles, or tightly bound proteins. One mechanism for the restart of a stalled replication fork involves nucleolytic cleavage mediated by the MUS81-EME2 endonuclease. By acting upon the stalled fork, MUS81-EME2 generates a DNA double-strand break (DSB) that can be repaired by homologous recombination, leading to the restoration of an active fork. MUS81-EME2 could also function in telomere maintenance. In Xenopus tropicalis (Western clawed frog), this protein is Structure-specific endonuclease subunit EME2 (eme2).